The chain runs to 264 residues: MKRILLTNDDGFDSSGLLALKDALKDIAHVMVVAPASEKSACGHGLTLTRPLSFVQLDDDFYKLEDGTPSDCVYLALNTLYKASCKPDLVISGINLGSNMGEDITYSGTAAGAMEGCIQGVPSIAISQLMPDKNCSKHFDFSLAKECIYKITQLIFAKGFPLGERKFLNINIPHIKPKECKGYKITQMGYRIYADNAHLHRNPRGQEYYWLGLHPLEWEERNDMPHSYGSDFKATHEHYVSITPIKLDMTSYEDSSSLCEWIQL.

A divalent metal cation contacts are provided by Asp9, Asp10, Ser40, and Asn95.

The protein belongs to the SurE nucleotidase family. A divalent metal cation is required as a cofactor.

It localises to the cytoplasm. The catalysed reaction is a ribonucleoside 5'-phosphate + H2O = a ribonucleoside + phosphate. Its function is as follows. Nucleotidase that shows phosphatase activity on nucleoside 5'-monophosphates. This Helicobacter hepaticus (strain ATCC 51449 / 3B1) protein is 5'-nucleotidase SurE.